The sequence spans 212 residues: uncharacterized protein (212 aa).

This is an uncharacterized protein from Acanthamoeba polyphaga mimivirus (APMV).